Consider the following 225-residue polypeptide: Urease accessory protein UreG (225 aa).

Residues 1 to 21 form a disordered region; sequence MHLDHHHESAAAVSADARRPD. 33 to 40 is a binding site for GTP; sequence GPVGSGKT.

Belongs to the SIMIBI class G3E GTPase family. UreG subfamily. Homodimer. UreD, UreF and UreG form a complex that acts as a GTP-hydrolysis-dependent molecular chaperone, activating the urease apoprotein by helping to assemble the nickel containing metallocenter of UreC. The UreE protein probably delivers the nickel.

It is found in the cytoplasm. Functionally, facilitates the functional incorporation of the urease nickel metallocenter. This process requires GTP hydrolysis, probably effectuated by UreG. The protein is Urease accessory protein UreG of Streptomyces coelicolor (strain ATCC BAA-471 / A3(2) / M145).